The following is a 545-amino-acid chain: Tripartite motif-containing protein 55 (545 aa).

The segment at 26-82 (CPICLEMFTKPVVILPCQHNLCRKCASDIFQASNPYLPTRGGTTVASGGRFRCPSCR) adopts an RING-type zinc-finger fold. A B box-type zinc finger spans residues 119-161 (LDQPMCEEHEEERINIYCLNCEVPTCSLCKVFGAHKDCQVAPL). 4 residues coordinate Zn(2+): Cys124, His127, Cys147, and His153. Residues 219–258 (YSILEERKTEMTQAITRTQEEKLEHVRTLIRKYSDHLENV) are a coiled coil. The COS domain maps to 269–327 (MDEPEMAVFLQNAKTLLQKITEASKAFQMEKIEQGYEIMNNFTVNLNREEKIIREIDFS). 2 disordered regions span residues 324-378 (IDFS…SELA) and 406-528 (LVTQ…GADS). A compositionally biased stretch (acidic residues) spans 328 to 355 (REEEDEDDEGEVDEEGEGEDAVEVEEAE). Low complexity-rich tracts occupy residues 417-426 (SQQTTQSETS) and 469-493 (SAAEDSSVQSAEVAEAAANEQAAVS). The segment covering 495 to 506 (KESSSTAATSQI) has biased composition (polar residues). Positions 510-520 (ASSPQGQAAAL) are enriched in low complexity.

Homooligomer and heterooligomer. Interacts with titin/TTN. Interacts with myosins. Interacts with SQSTM1 and NBR1. Probably interacts with TRIM63 and TRIM54. Post-translationally, targeted for degradation through the proteasomal and lysosomal pathways in the presence of SUMO3.

It localises to the nucleus. The protein localises to the cytoplasm. The catalysed reaction is S-ubiquitinyl-[E2 ubiquitin-conjugating enzyme]-L-cysteine + [acceptor protein]-L-lysine = [E2 ubiquitin-conjugating enzyme]-L-cysteine + N(6)-ubiquitinyl-[acceptor protein]-L-lysine.. In terms of biological role, E3 ubiquitin ligase that plays an important role in regulating cardiac development and contractility, muscle growth, metabolism, and fiber-type differentiation. Acts as a critical factor that regulates cardiomyocyte size during development in concert with TRIM63 by regulating E2F1-mediated gene expression. Plays a role in apoptosis induction in cardiomyocytes by promoting ubiquitination of the DUSP1 phosphatase. Promotes non-canonical NF-kappa-B signaling and B-cell-mediated immune responses by mediating NFKB2 'Lys-48'-linked ubiquitination and processing. In turn, NFKB2 is further processed by valosin-containing protein/VCP, an ATPase that mediates ubiquitin-dependent protein degradation by the proteasome. May play a role in preventing macrophages from producing inflammatory factors and migrating by downregulating the level of nuclear NF-kappa-B subunit RELA. Also modifies PPARG via polyubiquitination and accelerates PPARG proteasomal degradation to inhibit its activity. This chain is Tripartite motif-containing protein 55 (Trim55), found in Rattus norvegicus (Rat).